A 1118-amino-acid chain; its full sequence is Protein translocase subunit SecA (1118 aa).

ATP is bound by residues Gln176, 194–198 (GEGKT), and Asp693. Positions 1034–1056 (QQPVQQPKYRETKDEAGSAFGGG) are disordered.

Belongs to the SecA family. In terms of assembly, monomer and homodimer. Part of the essential Sec protein translocation apparatus which comprises SecA, SecYEG and auxiliary proteins SecDF. Other proteins may also be involved.

It is found in the cell inner membrane. Its subcellular location is the cytoplasm. The catalysed reaction is ATP + H2O + cellular proteinSide 1 = ADP + phosphate + cellular proteinSide 2.. Functionally, part of the Sec protein translocase complex. Interacts with the SecYEG preprotein conducting channel. Has a central role in coupling the hydrolysis of ATP to the transfer of proteins into and across the cell membrane, serving as an ATP-driven molecular motor driving the stepwise translocation of polypeptide chains across the membrane. The sequence is that of Protein translocase subunit SecA from Cytophaga hutchinsonii (strain ATCC 33406 / DSM 1761 / CIP 103989 / NBRC 15051 / NCIMB 9469 / D465).